The sequence spans 220 residues: Octanoyltransferase (220 aa).

In terms of domain architecture, BPL/LPL catalytic spans 31–206 (DDTPDEVWLV…ELVTLLDYEQ (176 aa)). Residues 70–77 (RGGQVTYH), 137–139 (SLG), and 150–152 (GLA) each bind substrate. C168 (acyl-thioester intermediate) is an active-site residue.

This sequence belongs to the LipB family.

The protein resides in the cytoplasm. The enzyme catalyses octanoyl-[ACP] + L-lysyl-[protein] = N(6)-octanoyl-L-lysyl-[protein] + holo-[ACP] + H(+). Its pathway is protein modification; protein lipoylation via endogenous pathway; protein N(6)-(lipoyl)lysine from octanoyl-[acyl-carrier-protein]: step 1/2. In terms of biological role, catalyzes the transfer of endogenously produced octanoic acid from octanoyl-acyl-carrier-protein onto the lipoyl domains of lipoate-dependent enzymes. Lipoyl-ACP can also act as a substrate although octanoyl-ACP is likely to be the physiological substrate. The polypeptide is Octanoyltransferase (Vibrio campbellii (strain ATCC BAA-1116)).